The primary structure comprises 114 residues: Large ribosomal subunit protein uL22 (114 aa).

Belongs to the universal ribosomal protein uL22 family. As to quaternary structure, part of the 50S ribosomal subunit.

This protein binds specifically to 23S rRNA; its binding is stimulated by other ribosomal proteins, e.g. L4, L17, and L20. It is important during the early stages of 50S assembly. It makes multiple contacts with different domains of the 23S rRNA in the assembled 50S subunit and ribosome. Its function is as follows. The globular domain of the protein is located near the polypeptide exit tunnel on the outside of the subunit, while an extended beta-hairpin is found that lines the wall of the exit tunnel in the center of the 70S ribosome. This Mycoplasmopsis agalactiae (strain NCTC 10123 / CIP 59.7 / PG2) (Mycoplasma agalactiae) protein is Large ribosomal subunit protein uL22.